The primary structure comprises 412 residues: Vacuolar calcium ion transporter (412 aa).

At 1–55 the chain is on the cytoplasmic side; the sequence is MIERLKIAKNRLEAMNSFNFPAQDRHERAPLLGSEYDHSMARQLSLLNVVGMTKS. Residues 56–76 form a helical membrane-spanning segment; sequence VLMSSYFNLMLVFVPIGLIAG. The Lumenal segment spans residues 77–83; the sequence is WFEWNAK. Residues 84 to 104 form a helical membrane-spanning segment; it reads SVFILNMLAIIPLASLLSFAT. Residues 105-114 are Cytoplasmic-facing; it reads EQLSIISGPT. A helical membrane pass occupies residues 115-135; the sequence is LGALLNASFGNAIELIVGVLA. At 136–148 the chain is on the lumenal side; that stretch reads LKRGELRIVQSSL. Residues 149–169 form a helical membrane-spanning segment; that stretch reads LGSILSNLLLVFGMCLVTTGI. Over 170 to 177 the chain is Cytoplasmic; the sequence is RREITTFN. Residues 178–198 form a helical membrane-spanning segment; that stretch reads ITVAQTMIAMLALSTATILIP. At 199 to 215 the chain is on the lumenal side; that stretch reads ATFHYSLPDNANSENAL. Residues 216–236 traverse the membrane as a helical segment; the sequence is LHVSRGTAVIVLIVYVLLLVF. Topologically, residues 237-264 are cytoplasmic; it reads QLKTHKHVCHDPSEVEEETEPRILGLRS. A helical membrane pass occupies residues 265 to 285; it reads SIAMLAIVTVFVSLCADYLVG. The Lumenal portion of the chain corresponds to 286 to 299; the sequence is SIDQLVEEVNISKT. The chain crosses the membrane as a helical span at residues 300-320; the sequence is FVGLVILPVVGNAAEHVTAIV. The Cytoplasmic segment spans residues 321–334; the sequence is VSYRGQMDLALGVA. The chain crosses the membrane as a helical span at residues 335-355; sequence IGSSIQIALFLAPFLVIVGWI. Residues 356–358 lie on the Lumenal side of the membrane; the sequence is ISQ. A helical membrane pass occupies residues 359-379; sequence PLTLYFESLETVILFVSVFLV. Topologically, residues 380-389 are cytoplasmic; sequence NYLIQDGATH. A helical membrane pass occupies residues 390–410; the sequence is WLEGVQLLALYAIVVLAFFYY. The Lumenal segment spans residues 411-412; sequence PQ.

Belongs to the Ca(2+):cation antiporter (CaCA) (TC 2.A.19) family.

The protein localises to the vacuole membrane. Its subcellular location is the endoplasmic reticulum membrane. Has a role in promoting intracellular calcium ion sequestration via the exchange of calcium ions for hydrogen ions across the vacuolar membrane. Involved also in manganese ion homeostasis via its uptake into the vacuole. The sequence is that of Vacuolar calcium ion transporter (vcx1) from Schizosaccharomyces pombe (strain 972 / ATCC 24843) (Fission yeast).